We begin with the raw amino-acid sequence, 237 residues long: Carbohydrate deacetylase (237 aa).

The Mg(2+) site is built by His-59 and His-125.

The protein belongs to the YdjC deacetylase family. Mg(2+) is required as a cofactor.

In terms of biological role, probably catalyzes the deacetylation of acetylated carbohydrates an important step in the degradation of oligosaccharides. In Halalkalibacterium halodurans (strain ATCC BAA-125 / DSM 18197 / FERM 7344 / JCM 9153 / C-125) (Bacillus halodurans), this protein is Carbohydrate deacetylase.